A 247-amino-acid chain; its full sequence is Nodulation protein H (247 aa).

Positions 1–16 (MTHSTLPPRPFAILAM) are hydrophobic.

In terms of biological role, required for the formation of sulfated nod factor. Proposed to transfer activated sulfate (PAPS) to a N-acetylglucosamine of the nod factor. The protein is Nodulation protein H (nodH) of Rhizobium meliloti (Ensifer meliloti).